A 656-amino-acid polypeptide reads, in one-letter code: Pyoverdine export ATP-binding/permease protein PvdT (656 aa).

The 240-residue stretch at 6–245 folds into the ABC transporter domain; it reads IDLRGIRKSY…SANPAALQAV (240 aa). 43–50 is a binding site for ATP; sequence GASGSGKS. A run of 4 helical transmembrane segments spans residues 284–304, 538–558, 589–609, and 619–639; these read ALTLLGIVIGVASVVVMLAVG, IAAISLLVGGIGVMNIMLMTV, LSVVGGLAGIVLALAMGAALL, and LSAVIGAFACALVTGVIFGFM.

The protein belongs to the ABC transporter superfamily. Macrolide exporter (TC 3.A.1.122) family. As to quaternary structure, part of the tripartite efflux system PvdRT-OpmQ, which is composed of an inner membrane component with both ATPase and permease domains, PvdT, a periplasmic membrane fusion protein, PvdR, and an outer membrane component, OpmQ.

Its subcellular location is the cell inner membrane. In terms of biological role, part of the tripartite efflux system PvdRT-OpmQ required for the secretion into the extracellular milieu of the siderophore pyoverdine (PVD), which is involved in iron acquisition. This subunit binds PVD and drives its secretion by hydrolyzing ATP. The system is responsible for export of newly synthesized PVD after the final steps of biosynthesis have taken place in the periplasm. It is also responsible for recycling of PVD after internalization of ferri-PVD into the periplasm by the outer-membrane receptor FpvA and release of iron from PVD, thus making PVD available for new cycles of iron uptake. The sequence is that of Pyoverdine export ATP-binding/permease protein PvdT from Pseudomonas syringae pv. tomato (strain ATCC BAA-871 / DC3000).